We begin with the raw amino-acid sequence, 345 residues long: Heat-inducible transcription repressor HrcA (345 aa).

This sequence belongs to the HrcA family.

Its function is as follows. Negative regulator of class I heat shock genes (grpE-dnaK-dnaJ and groELS operons). Prevents heat-shock induction of these operons. The polypeptide is Heat-inducible transcription repressor HrcA (Desulfitobacterium hafniense (strain DSM 10664 / DCB-2)).